The following is a 268-amino-acid chain: Undecaprenyl-diphosphatase (268 aa).

Helical transmembrane passes span 47–67 (FTILIQLGAILAILALYFAKL), 83–103 (FVIGVLVAFLPAAVIGALAGG), 109–129 (LFNPWVVCFSLIVGGAILLWV), 144–164 (FPLPMYLYIGCAQCLAMIPGV), 184–204 (AAEFSFFLAIPTMVGAFVYDL), 217–237 (LIVAIGFAVSFVTAIIVVKSF), and 246–266 (FTLFAWWRVIVGTLGLIALAL).

This sequence belongs to the UppP family.

The protein localises to the cell inner membrane. The catalysed reaction is di-trans,octa-cis-undecaprenyl diphosphate + H2O = di-trans,octa-cis-undecaprenyl phosphate + phosphate + H(+). Functionally, catalyzes the dephosphorylation of undecaprenyl diphosphate (UPP). Confers resistance to bacitracin. This Rhodopseudomonas palustris (strain BisB18) protein is Undecaprenyl-diphosphatase.